Reading from the N-terminus, the 870-residue chain is Suppressor of yeast profilin deletion (870 aa).

The segment covering Ser252–Ser267 has biased composition (polar residues). 2 disordered regions span residues Ser252–Ala298 and Ser310–Ser574. Lys256 is covalently cross-linked (Glycyl lysine isopeptide (Lys-Gly) (interchain with G-Cter in ubiquitin)). Ser264 is subject to Phosphoserine. The span at Thr283–Lys292 shows a compositional bias: basic and acidic residues. Polar residues predominate over residues Ser310 to Phe323. At Ser331 the chain carries Phosphoserine. The span at Lys333–Arg342 shows a compositional bias: basic residues. A compositionally biased stretch (polar residues) spans His367 to Asn378. The span at Ser379–Ser390 shows a compositional bias: low complexity. Residues Pro398 to Thr409 are compositionally biased toward polar residues. Residue Thr416 is modified to Phosphothreonine. Residues Pro473–Ser485 are compositionally biased toward low complexity. Phosphoserine is present on residues Ser496 and Ser500. Residues Pro497–Val514 are compositionally biased toward polar residues. Thr577 carries the post-translational modification Phosphothreonine. The MHD domain occupies Gln609–Leu869.

It belongs to the SYP1 family. In terms of assembly, interacts with CDC3, CDC10, CDC11, CDC12, EDE1 and EPS15.

It is found in the bud neck. In terms of biological role, multi-functional protein that contributes to the endocytic process, but also to events that occur at the neck during budding and/or cytokinesis. Plays a role as an endocytic adapters with membrane-tubulation activity that associates with transmembrane cargo proteins and initiates the formation of endocytic sites. Contributes to the stabilization of the nascent clathrin-coated pit. Also plays a role in late endocytosis by mediating vesiculation. Involved in the regulation of cell cycle-dependent dynamics of the septin cytoskeleton by promoting septin turnover in different cell cycle stages. May act through the RHO2 signaling pathway to repolarize cortical actin patches in profilin-deficient cells. This Saccharomyces cerevisiae (strain ATCC 204508 / S288c) (Baker's yeast) protein is Suppressor of yeast profilin deletion (SYP1).